Here is a 1543-residue protein sequence, read N- to C-terminus: Tubby-related protein 4 (1543 aa).

WD repeat units lie at residues 6 to 72 (EHGP…STPQ), 73 to 115 (RINF…YEGR), 116 to 158 (WSVE…SGQR), 159 to 237 (HWSS…SDDY), 238 to 276 (APPQDGPAAYPIPVQNIKPLLTVSFTSGDISLMNNYDDL), 277 to 334 (SPTV…GEHI), and 335 to 372 (FTLDTLVQRPIISICWGHRDSRLLMASGPALYVVRVEH). The region spanning 364 to 414 (ALYVVRVEHRVSSLQLLCQQAIASTLREDKDVSKLTLPPRLCSYLSTAFIP) is the SOCS box domain. Disordered stretches follow at residues 530–577 (SPKI…SVGS) and 829–850 (TKINPPPPYPGTIPAAPTTAAP). Residue Ser577 is modified to Phosphoserine. Arg945 and Arg950 each carry asymmetric dimethylarginine. Disordered stretches follow at residues 1004-1058 (SPRA…HTAS), 1326-1355 (VPQRTEKFGKKNRKRLDSRAEEGSVQAITE), and 1367-1453 (DFNS…ASEK). Over residues 1036-1050 (TCSQCSGTGPSSQPG) the composition is skewed to polar residues. A compositionally biased stretch (basic and acidic residues) spans 1329-1347 (RTEKFGKKNRKRLDSRAEE). Ser1343 and Ser1374 each carry phosphoserine. Positions 1443–1453 (EEAKCRRASEK) are enriched in basic and acidic residues. Residues 1466–1543 (VMANKQPLWN…ALANVTQRLK (78 aa)) are TUB.

The protein belongs to the TUB family. In terms of tissue distribution, expressed mainly in the brain, skeletal muscle, testis and kidney.

It is found in the cytoplasm. The protein operates within protein modification; protein ubiquitination. Its function is as follows. May be a substrate-recognition component of a SCF-like ECS (Elongin-Cullin-SOCS-box protein) E3 ubiquitin ligase complex which mediates the ubiquitination and subsequent proteasomal degradation of target proteins. In Homo sapiens (Human), this protein is Tubby-related protein 4 (TULP4).